A 388-amino-acid polypeptide reads, in one-letter code: Succinyl-diaminopimelate desuccinylase (388 aa).

Zn(2+) is bound at residue H72. D74 is a catalytic residue. D105 is a Zn(2+) binding site. E139 (proton acceptor) is an active-site residue. Residues E140, E168, and H353 each contribute to the Zn(2+) site.

The protein belongs to the peptidase M20A family. DapE subfamily. In terms of assembly, homodimer. The cofactor is Zn(2+). Co(2+) is required as a cofactor.

The enzyme catalyses N-succinyl-(2S,6S)-2,6-diaminopimelate + H2O = (2S,6S)-2,6-diaminopimelate + succinate. It functions in the pathway amino-acid biosynthesis; L-lysine biosynthesis via DAP pathway; LL-2,6-diaminopimelate from (S)-tetrahydrodipicolinate (succinylase route): step 3/3. Functionally, catalyzes the hydrolysis of N-succinyl-L,L-diaminopimelic acid (SDAP), forming succinate and LL-2,6-diaminopimelate (DAP), an intermediate involved in the bacterial biosynthesis of lysine and meso-diaminopimelic acid, an essential component of bacterial cell walls. The sequence is that of Succinyl-diaminopimelate desuccinylase from Orientia tsutsugamushi (strain Ikeda) (Rickettsia tsutsugamushi).